The sequence spans 170 residues: Adenine phosphoribosyltransferase (170 aa).

This sequence belongs to the purine/pyrimidine phosphoribosyltransferase family. Homodimer.

It localises to the cytoplasm. The enzyme catalyses AMP + diphosphate = 5-phospho-alpha-D-ribose 1-diphosphate + adenine. Its pathway is purine metabolism; AMP biosynthesis via salvage pathway; AMP from adenine: step 1/1. In terms of biological role, catalyzes a salvage reaction resulting in the formation of AMP, that is energically less costly than de novo synthesis. This Fervidobacterium nodosum (strain ATCC 35602 / DSM 5306 / Rt17-B1) protein is Adenine phosphoribosyltransferase.